The sequence spans 162 residues: Heat shock protein beta-6 (162 aa).

The tract at residues 1-72 (MEIRVPVQPS…PTAQVPTDPG (72 aa)) is involved in stabilization of the HSPB1:HSBP6 heterodimer. Ser-16 bears the Phosphoserine mark. An Isoglutamyl lysine isopeptide (Gln-Lys) (interchain with K-162) cross-link involves residue Gln-31. In terms of domain architecture, sHSP spans 56 to 162 (RAPSVALPTA…ASLPSPPAAK (107 aa)). A Deamidated glutamine modification is found at Gln-66. Ser-157 carries the post-translational modification Phosphoserine. Lys-162 is covalently cross-linked (Isoglutamyl lysine isopeptide (Lys-Gln) (interchain with Q-31)).

This sequence belongs to the small heat shock protein (HSP20) family. Homodimer. Small heat shock proteins form high molecular mass oligomers containing variable number of monomers; these oligomers display a very flexible quaternary structure easily exchanging their subunits. Heterooligomer with HSPB1; formed through oligomerization of HSPB1:HSBP6 dimers; subunit exchange leads to formation of at least two different heterooligomeric complexes, differing in variable quantities of HSPB1 and HSPB6 homodimers in addition to HSPB1:HSPB6 heterodimers. Heterooligomer with CRYAB; large heterooligomers consist of CRYAB homodimers and HSPB5:HSPB6 heterodimers but lacking HSPB6 homodimers. Interacts with BAG3. Interacts (phosphorylated) with YWHAZ. Interacts with PDE4A and PDE4D; required for maintenance of the non-phosphorylated state of HSPB6 under basal conditions. Interacts with KDR. Interacts with PRKD1. Post-translationally, the N-terminus is blocked. Phosphorylated at Ser-16 by PKA and probably PKD1K; required to protect cardiomyocytes from apoptosis. In terms of tissue distribution, widely expressed. High expression in muscle tissues.

The protein resides in the cytoplasm. It is found in the nucleus. The protein localises to the secreted. In terms of biological role, small heat shock protein which functions as a molecular chaperone probably maintaining denatured proteins in a folding-competent state. Seems to have versatile functions in various biological processes. Plays a role in regulating muscle function such as smooth muscle vasorelaxation and cardiac myocyte contractility. May regulate myocardial angiogenesis implicating KDR. Overexpression mediates cardioprotection and angiogenesis after induced damage. Stabilizes monomeric YWHAZ thereby supporting YWHAZ chaperone-like activity. The chain is Heat shock protein beta-6 (Hspb6) from Rattus norvegicus (Rat).